Reading from the N-terminus, the 468-residue chain is Neurexin-1-beta (468 aa).

Positions 1-46 are cleaved as a signal peptide; it reads MYQRMLRCGAELGSPGGGSSGGAGGRLALLWIVPLTLSGLLGVAWG. Residues 47 to 391 lie on the Extracellular side of the membrane; sequence ASSLGAHHIH…AEVIRESSST (345 aa). One can recognise a Laminin G-like domain in the interval 87–285; that stretch reads YIFSKGGGQI…DANIAIVGNV (199 aa). Ca(2+) is bound by residues D137 and V154. An N-linked (GlcNAc...) asparagine glycan is attached at N184. An essential for interaction with CBLN1; modulates interaction affinity with NLGN1, NLGN2 and NLGN3; prevents interaction with DAG1/alpha-dystroglycan; modulates interaction with alpha-latrotoxin region spans residues 201–230; the sequence is GNNDNERLAIARQRIPYRLGRVVDEWLLDK. I236 and N238 together coordinate Ca(2+). An O-linked (Xyl...) (heparan sulfate) serine glycan is attached at S346. The tract at residues 350–381 is disordered; sequence PSDDEDIDPCEPSSGGLANPTRVGGREPYPGS. The chain crosses the membrane as a helical span at residues 392-414; it reads TGMVVGIVAAAALCILILLYAMY. Over 415–468 the chain is Cytoplasmic; the sequence is KYRNRDEGSYHVDESRNYISNSAQSNGAVVKEKQPSSAKSANKNKKNKDKEYYV. The tract at residues 435-468 is disordered; sequence NSAQSNGAVVKEKQPSSAKSANKNKKNKDKEYYV. Phosphoserine occurs at positions 450, 451, and 454.

This sequence belongs to the neurexin family. In terms of assembly, the cytoplasmic C-terminal region binds to CASK. Binds NLGN1, NLGN2 and NLGN3, DAG1 (alpha-dystroglycan) and alpha-latrotoxin. Binding to neuroligins is calcium-dependent, and the binding preference ranks as follow: NLGN1 &gt; NLGN4 &gt;&gt; NLGN3 &gt; NLGN2. Interacts with CBLN2 and more weakly with CBLN4. Interacts with CBLN1; interaction is CBLN1 hexamer form-dependent; CBLN1-binding is calcium-independent; isoform 1b does not interact with CBLN1. Interacts with CLSTN3. Post-translationally, N-glycosylated. In terms of processing, O-glycosylated; contains heparan sulfate. Heparan sulfate attachment is required for synapse development by mediating interactions with neuroligins. In terms of tissue distribution, brain.

It localises to the presynaptic cell membrane. In terms of biological role, neuronal cell surface protein involved in cell recognition and cell adhesion by forming intracellular junctions through binding to neuroligins. Plays a role in formation of synaptic junctions. Functions as part of a trans-synaptic complex by binding to cerebellins and postsynaptic GRID1. This interaction helps regulate the activity of NMDA and AMPA receptors at hippocampal synapses without affecting synapse formation. NRXN1B-CBLN2-GRID1 complex transduce presynaptic signals into postsynaptic NMDAR response. This chain is Neurexin-1-beta, found in Rattus norvegicus (Rat).